We begin with the raw amino-acid sequence, 689 residues long: DNA ligase (689 aa).

Residues 51-55 (DSEYD), 100-101 (SL), and E129 contribute to the NAD(+) site. The N6-AMP-lysine intermediate role is filled by K131. 4 residues coordinate NAD(+): R152, E189, K308, and K332. 4 residues coordinate Zn(2+): C426, C429, C444, and C450. The 81-residue stretch at 609–689 (ADEQPLKGQT…ELLALLAANS (81 aa)) folds into the BRCT domain.

It belongs to the NAD-dependent DNA ligase family. LigA subfamily. The cofactor is Mg(2+). Mn(2+) is required as a cofactor.

The catalysed reaction is NAD(+) + (deoxyribonucleotide)n-3'-hydroxyl + 5'-phospho-(deoxyribonucleotide)m = (deoxyribonucleotide)n+m + AMP + beta-nicotinamide D-nucleotide.. Its function is as follows. DNA ligase that catalyzes the formation of phosphodiester linkages between 5'-phosphoryl and 3'-hydroxyl groups in double-stranded DNA using NAD as a coenzyme and as the energy source for the reaction. It is essential for DNA replication and repair of damaged DNA. The sequence is that of DNA ligase from Shewanella sp. (strain ANA-3).